The sequence spans 450 residues: Tubulin alpha chain (450 aa).

A GTP-binding site is contributed by Gln-11. Lys-40 is modified (N6-acetyllysine). Positions 71, 140, 144, 145, 179, 206, and 228 each coordinate GTP. Glu-71 contacts Mg(2+). Glu-254 is a catalytic residue.

It belongs to the tubulin family. Dimer of alpha and beta chains. A typical microtubule is a hollow water-filled tube with an outer diameter of 25 nm and an inner diameter of 15 nM. Alpha-beta heterodimers associate head-to-tail to form protofilaments running lengthwise along the microtubule wall with the beta-tubulin subunit facing the microtubule plus end conferring a structural polarity. Microtubules usually have 13 protofilaments but different protofilament numbers can be found in some organisms and specialized cells. It depends on Mg(2+) as a cofactor. In terms of processing, acetylation of alpha chains at Lys-40 stabilizes microtubules and affects affinity and processivity of microtubule motors. This modification has a role in multiple cellular functions, ranging from cell motility, cell cycle progression or cell differentiation to intracellular trafficking and signaling.

The protein localises to the cytoplasm. It localises to the cytoskeleton. It catalyses the reaction GTP + H2O = GDP + phosphate + H(+). Tubulin is the major constituent of microtubules, a cylinder consisting of laterally associated linear protofilaments composed of alpha- and beta-tubulin heterodimers. Microtubules grow by the addition of GTP-tubulin dimers to the microtubule end, where a stabilizing cap forms. Below the cap, tubulin dimers are in GDP-bound state, owing to GTPase activity of alpha-tubulin. This Oxytricha granulifera (Ciliate) protein is Tubulin alpha chain.